The sequence spans 430 residues: ASMFKHDHYMDNGVRYPNGDGICEQLNETKCDAGFSYDRSICEGPHYWHTISKCFIACGIGQRQSPINIVSYDAKFRQRLPKLKFKPHMEKLKTEVTNHQNRAPEFEPEDGENLYVKLNNLVDGHYKFHNLHVHNGRTRRKGSEHSVNGRFTPMEAHLVFHHDDQTHFEPTRTKLGGAFPGHNDFVVVGVFLEVGDDGFGDEPDDEECKRILKGHHPDNNENGNGDNGNNGYNGDNGNNGDNGNNGYNGDNGNNGVNGNNGYNGDNGNNGDNGNNGYNGDNGNNGDNGNNGENGNNGENGNNGENGHKHGCRVKKAKHLSTILECAYRNDKVREFKKVGEEEGLDVHLTPEMPLPPLKNRHYYTYEGSLTTPPCTESVLWVVQKCHVQVSRRVLHALRNVEGYKDGTTLRKYGTRRPTQKNKVTVYKSFK.

Residue Asn-27 is glycosylated (N-linked (GlcNAc...) asparagine). An Alpha-carbonic anhydrase domain is found at Ala-33–Phe-429. Residues His-132, His-134, and His-157 each contribute to the Zn(2+) site. The tract at residues Asp-201–Arg-312 is disordered. The segment covering Glu-207–Asn-219 has biased composition (basic and acidic residues). The span at Asn-220–Glu-304 shows a compositional bias: low complexity. 27 tandem repeats follow at residues Gly-225–Asn-227, Gly-228–Asn-230, Gly-231–Asn-233, Gly-234–Asn-236, Gly-237–Asn-239, Gly-240–Asn-242, Gly-243–Asn-245, Gly-246–Asn-248, Gly-249–Asn-251, Gly-252–Asn-254, Gly-255–Asn-257, Gly-258–Asn-260, Gly-261–Asn-263, Gly-264–Asn-266, Gly-267–Asn-269, Gly-270–Asn-272, Gly-273–Asn-275, Gly-276–Asn-278, Gly-279–Asn-281, Gly-282–Asn-284, Gly-285–Asn-287, Gly-288–Asn-290, Gly-291–Asn-293, Gly-294–Asn-296, Gly-297–Asn-299, Gly-300–Asn-301, and Gly-303–Asn-305. The segment at Gly-225 to Asn-305 is 27 X 3 AA approximate tandem repeats of G-X-N. Substrate is bound at residue Thr-370–Thr-371.

Belongs to the alpha-carbonic anhydrase family. Homooligomer; disulfide-linked. May also be disulfide-linked to insoluble organic matrix. The cofactor is Zn(2+). Expressed in the mantle.

The protein resides in the secreted. The protein localises to the extracellular space. It localises to the extracellular matrix. It carries out the reaction hydrogencarbonate + H(+) = CO2 + H2O. Its function is as follows. Acts as a negative regulator for calcification in the shells of mollusks. May function both as a calcium concentrator and as a carbonic anhydrase required for production of carbonate ions, which are assembled to CaCO(3) at mineralization sites. Is important for shell formation in both the calcitic prismatic layer and the aragonitic nacreous layer. Shows inhibitory activity of crystal formation when present in free state but, when attached to the insoluble matrix, may regulate the form and size of aragonite crystal. This chain is Nacrein-like protein P2, found in Mizuhopecten yessoensis (Japanese scallop).